We begin with the raw amino-acid sequence, 176 residues long: Ribosome maturation factor RimP (176 aa).

Belongs to the RimP family.

The protein localises to the cytoplasm. Its function is as follows. Required for maturation of 30S ribosomal subunits. The chain is Ribosome maturation factor RimP from Chlorobium limicola (strain DSM 245 / NBRC 103803 / 6330).